The sequence spans 384 residues: Queuine tRNA-ribosyltransferase (384 aa).

D93 serves as the catalytic Proton acceptor. Substrate is bound by residues 93–97 (DSGGF), D147, Q202, and G229. Residues 260 to 266 (GVGYPEE) are RNA binding. The active-site Nucleophile is the D279. The interval 284–288 (TRAAR) is RNA binding; important for wobble base 34 recognition. Zn(2+) contacts are provided by C317, C319, C322, and H348.

The protein belongs to the queuine tRNA-ribosyltransferase family. As to quaternary structure, homodimer. Within each dimer, one monomer is responsible for RNA recognition and catalysis, while the other monomer binds to the replacement base PreQ1. It depends on Zn(2+) as a cofactor.

The enzyme catalyses 7-aminomethyl-7-carbaguanine + guanosine(34) in tRNA = 7-aminomethyl-7-carbaguanosine(34) in tRNA + guanine. The protein operates within tRNA modification; tRNA-queuosine biosynthesis. In terms of biological role, catalyzes the base-exchange of a guanine (G) residue with the queuine precursor 7-aminomethyl-7-deazaguanine (PreQ1) at position 34 (anticodon wobble position) in tRNAs with GU(N) anticodons (tRNA-Asp, -Asn, -His and -Tyr). Catalysis occurs through a double-displacement mechanism. The nucleophile active site attacks the C1' of nucleotide 34 to detach the guanine base from the RNA, forming a covalent enzyme-RNA intermediate. The proton acceptor active site deprotonates the incoming PreQ1, allowing a nucleophilic attack on the C1' of the ribose to form the product. After dissociation, two additional enzymatic reactions on the tRNA convert PreQ1 to queuine (Q), resulting in the hypermodified nucleoside queuosine (7-(((4,5-cis-dihydroxy-2-cyclopenten-1-yl)amino)methyl)-7-deazaguanosine). The protein is Queuine tRNA-ribosyltransferase of Koribacter versatilis (strain Ellin345).